The following is a 482-amino-acid chain: G patch domain-containing protein 2-like (482 aa).

A phosphoserine mark is found at S31, S86, and S88. Position 91 is a phosphothreonine (T91). 2 disordered regions span residues 195–222 and 408–482; these read SQPGRKERMECEAEEQKHGSDENMSECD and KRKR…TNGC. Basic and acidic residues predominate over residues 198-215; the sequence is GRKERMECEAEEQKHGSD. Over residues 414 to 427 the composition is skewed to low complexity; it reads VASASFSSPSPVHP. A compositionally biased stretch (polar residues) spans 468-482; sequence EKNSGCSSSPGTNGC.

The protein is G patch domain-containing protein 2-like (Gpatch2l) of Mus musculus (Mouse).